The chain runs to 500 residues: Lysine--tRNA ligase (500 aa).

Mg(2+)-binding residues include E410 and E417.

The protein belongs to the class-II aminoacyl-tRNA synthetase family. In terms of assembly, homodimer. Mg(2+) is required as a cofactor.

The protein localises to the cytoplasm. The enzyme catalyses tRNA(Lys) + L-lysine + ATP = L-lysyl-tRNA(Lys) + AMP + diphosphate. The sequence is that of Lysine--tRNA ligase from Shewanella loihica (strain ATCC BAA-1088 / PV-4).